Reading from the N-terminus, the 113-residue chain is Hydrogenase maturation factor HypA (113 aa).

A Ni(2+)-binding site is contributed by histidine 2. Positions 73, 76, 89, and 92 each coordinate Zn(2+).

It belongs to the HypA/HybF family.

In terms of biological role, involved in the maturation of [NiFe] hydrogenases. Required for nickel insertion into the metal center of the hydrogenase. In Azorhizobium caulinodans (strain ATCC 43989 / DSM 5975 / JCM 20966 / LMG 6465 / NBRC 14845 / NCIMB 13405 / ORS 571), this protein is Hydrogenase maturation factor HypA.